A 337-amino-acid polypeptide reads, in one-letter code: Protein-methionine-sulfoxide reductase catalytic subunit MsrP (337 aa).

The tat-type signal signal peptide spans 1–48; sequence MLIKIPSRSDCSESEVTSETLYLSRRRLLGASFAGLALASGLPRLGFA. Mo-molybdopterin-binding positions include asparagine 94, 97 to 98, cysteine 152, threonine 187, asparagine 237, arginine 242, and 253 to 255; these read YE and SIK.

Belongs to the MsrP family. As to quaternary structure, heterodimer of a catalytic subunit (MsrP) and a heme-binding subunit (MsrQ). Requires Mo-molybdopterin as cofactor. In terms of processing, predicted to be exported by the Tat system. The position of the signal peptide cleavage has not been experimentally proven.

Its subcellular location is the periplasm. It carries out the reaction L-methionyl-[protein] + a quinone + H2O = L-methionyl-(S)-S-oxide-[protein] + a quinol. The catalysed reaction is L-methionyl-[protein] + a quinone + H2O = L-methionyl-(R)-S-oxide-[protein] + a quinol. In terms of biological role, part of the MsrPQ system that repairs oxidized periplasmic proteins containing methionine sulfoxide residues (Met-O), using respiratory chain electrons. Thus protects these proteins from oxidative-stress damage caused by reactive species of oxygen and chlorine generated by the host defense mechanisms. MsrPQ is essential for the maintenance of envelope integrity under bleach stress, rescuing a wide series of structurally unrelated periplasmic proteins from methionine oxidation. The catalytic subunit MsrP is non-stereospecific, being able to reduce both (R-) and (S-) diastereoisomers of methionine sulfoxide. This Pseudomonas aeruginosa (strain ATCC 15692 / DSM 22644 / CIP 104116 / JCM 14847 / LMG 12228 / 1C / PRS 101 / PAO1) protein is Protein-methionine-sulfoxide reductase catalytic subunit MsrP.